The following is an 880-amino-acid chain: Phosphoinositide 3-kinase regulatory subunit 5 (880 aa).

Methionine 1 bears the N-acetylmethionine mark. The interval serine 25 to leucine 101 is heterodimerization. Disordered stretches follow at residues glycine 315–histidine 339, serine 389–arginine 416, arginine 454–glutamate 510, and histidine 565–glutamate 601. Over residues glycine 318 to glutamate 335 the composition is skewed to acidic residues. A phosphoserine mark is found at serine 458 and serine 507. Residues alanine 571 to aspartate 585 show a composition bias toward pro residues. Residues proline 653 to serine 753 form an interaction with beta-gamma G protein dimers region.

In terms of assembly, heterodimer of a catalytic subunit (PIK3CG/p120) and a regulatory (PIK3R5a/p101) subunit. Interacts with beta-gamma G protein dimers. In terms of tissue distribution, ubiquitously expressed with high expression in fetal brain compared to adult brain. Abundant expression is observed in cerebellum, cerebral cortex, cerebral meninges, and vermis cerebelli.

It localises to the nucleus. The protein resides in the cytoplasm. It is found in the cell membrane. With respect to regulation, greatly activated by G gamma proteins. Functionally, regulatory subunit of the PI3K gamma complex. Required for recruitment of the catalytic subunit to the plasma membrane via interaction with beta-gamma G protein dimers. Required for G protein-mediated activation of PIK3CG. The protein is Phosphoinositide 3-kinase regulatory subunit 5 (PIK3R5) of Homo sapiens (Human).